The chain runs to 192 residues: Ion-translocating oxidoreductase complex subunit A (192 aa).

The next 6 membrane-spanning stretches (helical) occupy residues 5 to 25 (LLLL…FLGL), 39 to 59 (IGMS…SYLV), 65 to 85 (LPFE…AVVV), 102 to 122 (ALGI…VALL), 134 to 154 (AIYG…FSAM), and 171 to 191 (AIAM…TGLV).

This sequence belongs to the NqrDE/RnfAE family. As to quaternary structure, the complex is composed of six subunits: RnfA, RnfB, RnfC, RnfD, RnfE and RnfG.

It is found in the cell inner membrane. In terms of biological role, part of a membrane-bound complex that couples electron transfer with translocation of ions across the membrane. The protein is Ion-translocating oxidoreductase complex subunit A of Shewanella sediminis (strain HAW-EB3).